The following is a 212-amino-acid chain: Thiamine-phosphate synthase (212 aa).

4-amino-2-methyl-5-(diphosphooxymethyl)pyrimidine-binding positions include 40-44 (QFREK) and Asn-75. Mg(2+) is bound by residues Asp-76 and Asp-95. Position 113 (Ser-113) interacts with 4-amino-2-methyl-5-(diphosphooxymethyl)pyrimidine. 139-141 (TPS) is a 2-[(2R,5Z)-2-carboxy-4-methylthiazol-5(2H)-ylidene]ethyl phosphate binding site. Lys-142 provides a ligand contact to 4-amino-2-methyl-5-(diphosphooxymethyl)pyrimidine. 2-[(2R,5Z)-2-carboxy-4-methylthiazol-5(2H)-ylidene]ethyl phosphate-binding positions include Gly-171 and 191–192 (IS).

The protein belongs to the thiamine-phosphate synthase family. Mg(2+) is required as a cofactor.

The catalysed reaction is 2-[(2R,5Z)-2-carboxy-4-methylthiazol-5(2H)-ylidene]ethyl phosphate + 4-amino-2-methyl-5-(diphosphooxymethyl)pyrimidine + 2 H(+) = thiamine phosphate + CO2 + diphosphate. The enzyme catalyses 2-(2-carboxy-4-methylthiazol-5-yl)ethyl phosphate + 4-amino-2-methyl-5-(diphosphooxymethyl)pyrimidine + 2 H(+) = thiamine phosphate + CO2 + diphosphate. It catalyses the reaction 4-methyl-5-(2-phosphooxyethyl)-thiazole + 4-amino-2-methyl-5-(diphosphooxymethyl)pyrimidine + H(+) = thiamine phosphate + diphosphate. The protein operates within cofactor biosynthesis; thiamine diphosphate biosynthesis; thiamine phosphate from 4-amino-2-methyl-5-diphosphomethylpyrimidine and 4-methyl-5-(2-phosphoethyl)-thiazole: step 1/1. Its function is as follows. Condenses 4-methyl-5-(beta-hydroxyethyl)thiazole monophosphate (THZ-P) and 2-methyl-4-amino-5-hydroxymethyl pyrimidine pyrophosphate (HMP-PP) to form thiamine monophosphate (TMP). This is Thiamine-phosphate synthase from Staphylococcus carnosus (strain TM300).